The chain runs to 620 residues: Chaperone protein HscA homolog (620 aa).

It belongs to the heat shock protein 70 family.

Its function is as follows. Chaperone involved in the maturation of iron-sulfur cluster-containing proteins. Has a low intrinsic ATPase activity which is markedly stimulated by HscB. The chain is Chaperone protein HscA homolog from Pseudomonas fluorescens (strain SBW25).